A 461-amino-acid chain; its full sequence is Serine carboxypeptidase-like 51 (461 aa).

Positions 1–20 are cleaved as a signal peptide; that stretch reads MKTTVVYLVILCLIVSCTNG. N-linked (GlcNAc...) asparagine glycans are attached at residues Asn-99 and Asn-152. The active site involves Ser-166. N-linked (GlcNAc...) asparagine glycosylation occurs at Asn-340. Active-site residues include Asp-379 and His-438.

It belongs to the peptidase S10 family. Expressed in seedlings, roots, flowers and siliques.

It is found in the secreted. In terms of biological role, probable carboxypeptidase. The polypeptide is Serine carboxypeptidase-like 51 (SCPL51) (Arabidopsis thaliana (Mouse-ear cress)).